The sequence spans 381 residues: MVNRISILGSTGSIGVQTLDVARNLNIKVDGLAANKNIDLLEKQAREFQPKIVAVKDEERARILRDRLSDTDCKVVGGVEGLKMVASIETVETVVTSIVGIAGLIPTMEAIKHKKNIALANKETLVTAGHIVMSEAARMGVKILPVDSEHSAVFQSLMGNNKKDVAKIILTASGGPFRGRKKEELRNVTLREALNHPNWSMGSKITIDSATMMNKGLEVIEAHWLFEIPQDDIEVLVHPQSIIHSMVEYKDGSIIAQLGSPDMRLPIQFALTYPDRKQNNFSKLDIVKIGSLTFEAPDLEAFPCLGLAFEALRAGGTMPAVLNAANEKAVGLFLQEKIRFLDIPEIIEKVMGRHSVKPDPDIDDIIDVDLWARKIVEEIVK.

Positions 11, 12, 13, 14, 36, 37, and 121 each coordinate NADPH. Lysine 122 is a 1-deoxy-D-xylulose 5-phosphate binding site. An NADPH-binding site is contributed by glutamate 123. Residue aspartate 147 participates in Mn(2+) binding. Serine 148, glutamate 149, serine 173, and histidine 196 together coordinate 1-deoxy-D-xylulose 5-phosphate. Glutamate 149 serves as a coordination point for Mn(2+). Position 202 (glycine 202) interacts with NADPH. 1-deoxy-D-xylulose 5-phosphate is bound by residues serine 209, asparagine 214, lysine 215, and glutamate 218. Glutamate 218 is a binding site for Mn(2+).

Belongs to the DXR family. Mg(2+) serves as cofactor. Requires Mn(2+) as cofactor.

It catalyses the reaction 2-C-methyl-D-erythritol 4-phosphate + NADP(+) = 1-deoxy-D-xylulose 5-phosphate + NADPH + H(+). Its pathway is isoprenoid biosynthesis; isopentenyl diphosphate biosynthesis via DXP pathway; isopentenyl diphosphate from 1-deoxy-D-xylulose 5-phosphate: step 1/6. Functionally, catalyzes the NADPH-dependent rearrangement and reduction of 1-deoxy-D-xylulose-5-phosphate (DXP) to 2-C-methyl-D-erythritol 4-phosphate (MEP). The polypeptide is 1-deoxy-D-xylulose 5-phosphate reductoisomerase (Acetivibrio thermocellus (strain ATCC 27405 / DSM 1237 / JCM 9322 / NBRC 103400 / NCIMB 10682 / NRRL B-4536 / VPI 7372) (Clostridium thermocellum)).